Reading from the N-terminus, the 122-residue chain is Protein TCL1B3 (122 aa).

The protein belongs to the TCL1 family.

This is Protein TCL1B3 (Tcl1b3) from Mus musculus (Mouse).